The primary structure comprises 181 residues: MANTGAAKRIIEPLDPNRHDRAAFFCGIIQVDNFFKKTANKLSKADNLRVYVMTEDDGTTVIGFYAINSHSISYADLPERFSRTRPGHGSIPAAYISMIGRDQRYRGGGYGGDLLTDCLQRIAGIADQIGIAVVLLDVLVCGDEEKTSRRVALYSEYGFQPLPSMPLRMFLPIATIRSLMG.

It belongs to the acetyltransferase family. As to quaternary structure, forms a complex with cognate antitoxin TacA.

Functionally, probable toxin component of a type II toxin-antitoxin (TA) system. Might acetylate tRNA and inhibit translation. Should be neutralized by cognate antitoxin TacA (y4aR). In Sinorhizobium fredii (strain NBRC 101917 / NGR234), this protein is Probable toxin TacT.